The following is an 89-amino-acid chain: MSITPDRRQELIGEYANKANDTGSPEVQVALLTERIVNLTEHLKTHAKDFHSRRGLLMLVGRRRRLLDYVKRQDVKRYEALIGRLGLRR.

It belongs to the universal ribosomal protein uS15 family. As to quaternary structure, part of the 30S ribosomal subunit. Forms a bridge to the 50S subunit in the 70S ribosome, contacting the 23S rRNA.

Its function is as follows. One of the primary rRNA binding proteins, it binds directly to 16S rRNA where it helps nucleate assembly of the platform of the 30S subunit by binding and bridging several RNA helices of the 16S rRNA. Functionally, forms an intersubunit bridge (bridge B4) with the 23S rRNA of the 50S subunit in the ribosome. The polypeptide is Small ribosomal subunit protein uS15 (Acidiphilium cryptum (strain JF-5)).